Reading from the N-terminus, the 304-residue chain is 17-beta-hydroxysteroid dehydrogenase 13 (304 aa).

An N-terminal signal peptide occupies residues 1-19 (MNLILEFLLLVGVIIYSYL). Residue Ser-33 is modified to Phosphoserine. 40-67 (LITGAGHGIGRLTAYEFAKQKSRLVLWD) serves as a coordination point for NAD(+). Lys-79 carries the N6-acetyllysine modification. Ser-172 lines the substrate pocket. Tyr-185 (proton acceptor) is an active-site residue. Lys-189 is an NAD(+) binding site. Residues 276–304 (SSKHPHGGSQQPVTPIPGDLTPSSDFLKH) form a disordered region.

The protein belongs to the short-chain dehydrogenases/reductases (SDR) family. As to expression, expressed predominantly in the liver (at protein level).

The protein localises to the lipid droplet. The protein resides in the endoplasmic reticulum. The catalysed reaction is 17beta-estradiol + NAD(+) = estrone + NADH + H(+). It catalyses the reaction all-trans-retinol + NAD(+) = all-trans-retinal + NADH + H(+). The enzyme catalyses all-trans-retinal + NAD(+) + H2O = all-trans-retinoate + NADH + 2 H(+). Functionally, plays a pivotal role in hepatic lipid metabolism. In vitro, it catalyzes the oxidation of a variety of lipid substrates, including 17beta-estradiol, retinol, retinal, and leukotriene B4. The sequence is that of 17-beta-hydroxysteroid dehydrogenase 13 (Hsd17b13) from Mus musculus (Mouse).